A 215-amino-acid polypeptide reads, in one-letter code: UPF0502 protein YceH (215 aa).

Belongs to the UPF0502 family.

The chain is UPF0502 protein YceH from Salmonella heidelberg (strain SL476).